Reading from the N-terminus, the 100-residue chain is MIPLQHGLILAAILFVLGLTGVTIRRNLLFMLIGLEIMINAAALAFVVAGSYWGQADGQVMFILAISLAAAEASIGLALLLQLHRRSQNLNIDKVSEMRG.

3 helical membrane passes run 2 to 22 (IPLQ…LTGV), 28 to 48 (LLFM…AFVV), and 60 to 80 (VMFI…LALL).

This sequence belongs to the complex I subunit 4L family. In terms of assembly, NDH-1 is composed of 13 different subunits. Subunits NuoA, H, J, K, L, M, N constitute the membrane sector of the complex.

It is found in the cell inner membrane. It carries out the reaction a quinone + NADH + 5 H(+)(in) = a quinol + NAD(+) + 4 H(+)(out). Functionally, NDH-1 shuttles electrons from NADH, via FMN and iron-sulfur (Fe-S) centers, to quinones in the respiratory chain. The immediate electron acceptor for the enzyme in this species is believed to be ubiquinone. Couples the redox reaction to proton translocation (for every two electrons transferred, four hydrogen ions are translocated across the cytoplasmic membrane), and thus conserves the redox energy in a proton gradient. The sequence is that of NADH-quinone oxidoreductase subunit K from Erwinia tasmaniensis (strain DSM 17950 / CFBP 7177 / CIP 109463 / NCPPB 4357 / Et1/99).